Here is a 430-residue protein sequence, read N- to C-terminus: Maintenance of mitochondrial morphology protein 1 (430 aa).

Over 1–70 (MSQGLIETTT…NGNTWSFTQG (70 aa)) the chain is Lumenal. Residues 71–91 (LVIGQISVIFIIIVFVKFFVF) form a helical membrane-spanning segment. Over 92-430 (ADSSSHIPTK…TPGEFVNSNI (339 aa)) the chain is Cytoplasmic. Positions 159–387 (ASESLDWFNV…EPRFQVVRLP (229 aa)) constitute an SMP-LTD domain. The tract at residues 305 to 326 (GYSKENGSADSASDNDEDEDDG) is disordered. Residues 317 to 326 (SDNDEDEDDG) are compositionally biased toward acidic residues.

This sequence belongs to the MMM1 family. As to quaternary structure, homodimer. Component of the ER-mitochondria encounter structure (ERMES) or MDM complex, composed of MMM1, MDM10, MDM12 and MDM34. An MMM1 homodimer associates with one molecule of MDM12 on each side in a pairwise head-to-tail manner, and the SMP-LTD domains of MMM1 and MDM12 generate a continuous hydrophobic tunnel for phospholipid trafficking.

The protein localises to the endoplasmic reticulum membrane. Its function is as follows. Component of the ERMES/MDM complex, which serves as a molecular tether to connect the endoplasmic reticulum (ER) and mitochondria. Components of this complex are involved in the control of mitochondrial shape and protein biogenesis, and function in nonvesicular lipid trafficking between the ER and mitochondria. The MDM12-MMM1 subcomplex functions in the major beta-barrel assembly pathway that is responsible for biogenesis of all outer membrane beta-barrel proteins, and acts in a late step after the SAM complex. The MDM10-MDM12-MMM1 subcomplex further acts in the TOM40-specific pathway after the action of the MDM12-MMM1 complex. Essential for establishing and maintaining the structure of mitochondria and maintenance of mtDNA nucleoids. The polypeptide is Maintenance of mitochondrial morphology protein 1 (Candida dubliniensis (strain CD36 / ATCC MYA-646 / CBS 7987 / NCPF 3949 / NRRL Y-17841) (Yeast)).